Reading from the N-terminus, the 135-residue chain is Bacilliredoxin CHU_0972 (135 aa).

The protein belongs to the bacilliredoxin family.

The protein is Bacilliredoxin CHU_0972 of Cytophaga hutchinsonii (strain ATCC 33406 / DSM 1761 / CIP 103989 / NBRC 15051 / NCIMB 9469 / D465).